Consider the following 268-residue polypeptide: Tryptophan synthase alpha chain (268 aa).

Residues Glu49 and Asp60 each act as proton acceptor in the active site.

The protein belongs to the TrpA family. As to quaternary structure, tetramer of two alpha and two beta chains.

It carries out the reaction (1S,2R)-1-C-(indol-3-yl)glycerol 3-phosphate + L-serine = D-glyceraldehyde 3-phosphate + L-tryptophan + H2O. The protein operates within amino-acid biosynthesis; L-tryptophan biosynthesis; L-tryptophan from chorismate: step 5/5. Functionally, the alpha subunit is responsible for the aldol cleavage of indoleglycerol phosphate to indole and glyceraldehyde 3-phosphate. This Escherichia coli O7:K1 (strain IAI39 / ExPEC) protein is Tryptophan synthase alpha chain.